Reading from the N-terminus, the 431-residue chain is Histidinol dehydrogenase (431 aa).

The NAD(+) site is built by Y127, Q189, and N212. Substrate contacts are provided by S237, Q259, and H262. Residues Q259 and H262 each contribute to the Zn(2+) site. Residues E326 and H327 each act as proton acceptor in the active site. H327, D360, E414, and H419 together coordinate substrate. Zn(2+) is bound at residue D360. H419 is a binding site for Zn(2+).

This sequence belongs to the histidinol dehydrogenase family. Zn(2+) is required as a cofactor.

The enzyme catalyses L-histidinol + 2 NAD(+) + H2O = L-histidine + 2 NADH + 3 H(+). The protein operates within amino-acid biosynthesis; L-histidine biosynthesis; L-histidine from 5-phospho-alpha-D-ribose 1-diphosphate: step 9/9. Functionally, catalyzes the sequential NAD-dependent oxidations of L-histidinol to L-histidinaldehyde and then to L-histidine. The sequence is that of Histidinol dehydrogenase from Xanthomonas oryzae pv. oryzae (strain KACC10331 / KXO85).